The following is an 8886-amino-acid chain: Obscurin (8886 aa).

4 Ig-like domains span residues 9–99 (PRFL…LRVD), 109–201 (PHFL…LVVD), 234–320 (PPSP…QTYS), and 329–415 (PTVP…AELS). An intrachain disulfide couples C30 to C81. Residues 135-165 (SPQPAVSWSKDGRRLGPPDAPHVRVEEHGES) form a disordered region. Basic and acidic residues predominate over residues 144–164 (KDGRRLGPPDAPHVRVEEHGE). Disulfide bonds link C257/C309 and C352/C402. At S393 the chain carries Phosphoserine. The region spanning 513 to 610 (PPADPVVKAK…FPGTMHLVPM (98 aa)) is the Fibronectin type-III 1 domain. Ig-like domains are found at residues 702-793 (PSSK…QDIT), 859-951 (PKLV…VAEP), 951-1043 (PKLV…VAEP), 1043-1135 (PKMV…VTEP), 1135-1227 (PKLV…VAEP), 1227-1319 (PKLV…VTEP), 1319-1407 (PKLV…FRLD), 1411-1503 (PKLV…VAEP), 1503-1595 (PKLV…VAEP), 1595-1687 (PKLA…VAEP), 1687-1779 (PKLA…VAEP), 1779-1871 (PKLA…VAEP), 1871-1963 (PKLM…VAEP), 1963-2051 (PKLV…FRLD), 2055-2147 (TRLM…VAEA), 2152-2241 (PERP…EEVA), 2242-2325 (AKFS…ARLT), 2329-2415 (PRVV…AALR), 2420-2504 (PVLF…AKLN), 2598-2681 (PVSF…ASLR), 2721-2812 (PVTL…QSIT), 2900-2984 (PVVL…AEVT), 3078-3162 (PVVF…SKVS), 3258-3342 (PVDI…AKLC), 3348-3431 (NRFT…ARLL), 3527-3610 (PSIF…SSIV), 3616-3700 (PVRF…ATLT), 3785-3876 (ATLT…ATLT), 3881-3964 (PAKF…ATLT), 4042-4125 (PTKF…ATLS), 4130-4213 (PSRF…ATLS), 4219-4301 (PRFI…ATLN), 4307-4389 (PRFI…AVLT), 4395-4477 (PKFT…ATLS), 4483-4565 (PRFI…ATLS), 4571-4653 (PRFI…ATLS), 4659-4741 (PRFI…ATLS), 4746-4829 (PAKF…ATLS), 4833-4916 (PQVV…TSAT), 4923-5007 (PVRF…ARLS), 5013-5105 (PKFK…PEVT), 5378-5464 (LEVL…ARLS), and 5557-5659 (PQMV…TFNV). 14 cysteine pairs are disulfide-bonded: C885/C935, C977/C1027, C1069/C1119, C1161/C1211, C1253/C1303, C1345/C1395, C1437/C1487, C1529/C1579, C1621/C1671, C1713/C1763, C1805/C1855, C1897/C1947, C1989/C2039, and C2081/C2131. C2263 and C2313 form a disulfide bridge. Cystine bridges form between C2620–C2669, C2743–C2793, C2922–C2972, C3100–C3150, C3280–C3330, C3369–C3419, C3549–C3599, and C3638–C3688. A Phosphoserine modification is found at S3321. S3802 is subject to Phosphoserine. 14 disulfide bridges follow: C3815–C3864, C3903–C3952, C4064–C4113, C4152–C4201, C4240–C4289, C4328–C4377, C4416–C4465, C4504–C4553, C4592–C4641, C4680–C4729, C4768–C4817, C4856–C4906, C4945–C4995, and C5034–C5086. S4960 is subject to Phosphoserine. The region spanning 5471-5569 (PPEDAEVVGR…VKIAPAPAPA (99 aa)) is the Fibronectin type-III 2 domain. The cysteines at positions 5590 and 5643 are disulfide-linked. The residue at position 5699 (S5699) is a Phosphoserine. The interval 5700–5736 (REPTLDSISELPEEDSRVQHLRQEAEETAPDLSEGYS) is disordered. Position 5703 is a phosphothreonine (T5703). S5706 is modified (phosphoserine). Residues 5713–5724 (EDSRVQHLRQEA) are compositionally biased toward basic and acidic residues. T5737 carries the post-translational modification Phosphothreonine. A Phosphoserine modification is found at S5754. The IQ domain occupies 5821 to 5850 (LDKAAVKIQAAFKGYKVRKEMKQQEGPVFS). Residues 5847 to 5930 (PVFSRTFGDT…QVSTKSGRVS (84 aa)) form the Ig-like 48 domain. C5868 and C5920 are oxidised to a cystine. The tract at residues 5977 to 5996 (EEELFLSADEGPGEPEEPAD) is disordered. 3 Ig-like domains span residues 6077 to 6166 (PVFL…AELR), 6209 to 6298 (PQVL…ARLL), and 6320 to 6416 (PRIL…LHIS). C6098 and C6150 are disulfide-bonded. The segment at 6504–6546 (KLQVPGGDSDEETKTPSASPRHGRSRPSSSVQESSSESEDGDS) is disordered. Phosphoserine is present on S6512. Phosphothreonine is present on T6518. Positions 6519–6538 (PSASPRHGRSRPSSSVQESS) are enriched in low complexity. Phosphoserine is present on residues S6520 and S6522. Residues 6549-6616 (EIFDIYVVTA…SPAYLDKRLK (68 aa)) form the SH3 domain. In terms of domain architecture, DH spans 6642–6826 (RLSSVIQELL…SALPQRAENK (185 aa)). Positions 6844–6953 (EPIRQGHFIV…WVKEICGIQQ (110 aa)) constitute a PH domain. R6924 provides a ligand contact to a 1,2-diacyl-sn-glycero-3-phospho-(1D-myo-inositol-4,5-bisphosphate). Residue R6929 coordinates a 1,2-diacyl-sn-glycero-3-phospho-(1D-myo-inositol-3,4-bisphosphate). 2 Ig-like domains span residues 6963–7046 (PEFE…GNAS) and 7057–7147 (PRFV…GELY). 2 disulfide bridges follow: C6984-C7036 and C7078-C7131. A disordered region spans residues 7200–7257 (ALGPSPGDLPNTRQSEPPAFEEAASQIPGAASGTPEVSQPGTHKGLEQETTSSGSQGW). The span at 7247–7257 (QETTSSGSQGW) shows a compositional bias: polar residues. One can recognise an Ig-like 54 domain in the interval 7306-7394 (PSMQVTIEDV…GQVLCKAELL (89 aa)). Residues 7416–7669 (YDVQEEIGRG…TSQCLAHPWF (254 aa)) enclose the Protein kinase 1 domain. Residues 7422–7430 (IGRGVFGFV) and K7445 each bind ATP. Catalysis depends on D7535, which acts as the Proton acceptor. 3 disordered regions span residues 7717-7810 (GPPD…SPGC), 7879-8106 (EQAS…TTRK), and 8150-8180 (SSEE…VPLR). A Phosphoserine modification is found at S7779. The span at 7793-7804 (AAVPASPQSAGP) shows a compositional bias: low complexity. Positions 7941–7952 (TTAKDRGHKEGF) are enriched in basic and acidic residues. Residues 7986 to 7996 (SCHSELGSGSQ) are compositionally biased toward polar residues. 2 stretches are compositionally biased toward low complexity: residues 8000-8014 (GPPS…PPQS) and 8053-8073 (GSLS…ASQV). S8161 carries the post-translational modification Phosphoserine. In terms of domain architecture, Ig-like 55 spans 8380–8464 (KGRDQELSDE…VSNPLGTAVT (85 aa)). A disulfide bridge links C8401 with C8453. Positions 8474–8566 (PSSSPRPEVG…PSEQVLLGGP (93 aa)) constitute a Fibronectin type-III 3 domain. In terms of domain architecture, Protein kinase 2 spans 8590-8842 (FAFQMQIRRG…ASTCLQCGWL (253 aa)). ATP-binding positions include 8596–8604 (IRRGRFSVV) and K8619. Catalysis depends on D8709, which acts as the Proton acceptor.

It belongs to the protein kinase superfamily. CAMK Ser/Thr protein kinase family. As to quaternary structure, interacts (via protein kinase domain 1) with CDH2 and (via protein kinase domain 1) with ATP1B1. Isoform 2 is found in a complex with DSG2, DESM, GJA1, CDH2 and VCL. Isoform 3 is found in a complex with DSG2, DESM, GJA1, CDH2, ANK3 and VCL. Mg(2+) serves as cofactor. In terms of processing, autophosphorylated by protein kinase domain 1 and 2. Two small isoforms, one probably containing protein kinase domain 2 and a partial protein kinase domain 1 and one containing only protein kinase domain 2, are glycosylated. Expressed in skeletal muscles including flexor digitorum brevis (FDB), soleus and tibialis anterior muscles, and to a lesser extent in heart muscles (at protein level). Isoform 2 and isoform 3 are expressed in the myocardium (at protein level).

It is found in the cytoplasm. Its subcellular location is the myofibril. The protein localises to the sarcomere. It localises to the m line. The protein resides in the z line. It is found in the cell membrane. Its subcellular location is the sarcolemma. The protein localises to the nucleus. It localises to the secreted. The enzyme catalyses L-seryl-[protein] + ATP = O-phospho-L-seryl-[protein] + ADP + H(+). It catalyses the reaction L-threonyl-[protein] + ATP = O-phospho-L-threonyl-[protein] + ADP + H(+). Functionally, structural component of striated muscles which plays a role in myofibrillogenesis. Probably involved in the assembly of myosin into sarcomeric A bands in striated muscle. Has serine/threonine protein kinase activity and phosphorylates N-cadherin CDH2 and sodium/potassium-transporting ATPase subunit ATP1B1. Binds (via the PH domain) strongly to phosphatidylinositol 3,4-bisphosphate (PtdIns(3,4)P2) and phosphatidylinositol 4,5-bisphosphate (PtdIns(4,5)P2), and to a lesser extent to phosphatidylinositol 3-phosphate (PtdIns(3)P), phosphatidylinositol 4-phosphate (PtdIns(4)P), phosphatidylinositol 5-phosphate (PtdIns(5)P) and phosphatidylinositol 3,4,5-trisphosphate (PtdIns(3,4,5)P3). Its function is as follows. Isoform 2 and isoform 3: bind phosphatidylinositol bisphosphates (PIP2s) via their PH domains and negatively regulate the PI3K/AKT/mTOR signaling pathway, thus contributing to the regulation of cardiomyocyte size and adhesion. The polypeptide is Obscurin (Mus musculus (Mouse)).